The primary structure comprises 256 residues: uncharacterized protein (256 aa).

Helical transmembrane passes span 5–25, 30–50, 64–84, and 105–125; these read FIEGFETIWTVVRAVVLNYLL, ILSTILYVSAVISWNVSLKVF, VVIFILRIVSLFLWILADPAI, and VGITLYPLYVLLSWAVFLGII. Positions 198–256 are disordered; that stretch reads EKTKSLDSISHSSSSSRKSSTELKIPPVETRIVAEIPVPSSVKRRRHRPNKSMGSIKNS. The segment covering 203–215 has biased composition (low complexity); the sequence is LDSISHSSSSSRK. Phosphoserine is present on residues serine 210 and serine 211.

It localises to the endoplasmic reticulum membrane. Its subcellular location is the nucleus membrane. This is an uncharacterized protein from Schizosaccharomyces pombe (strain 972 / ATCC 24843) (Fission yeast).